A 67-amino-acid chain; its full sequence is DNA-directed RNA polymerase subunit omega (67 aa).

It belongs to the RNA polymerase subunit omega family. The RNAP catalytic core consists of 2 alpha, 1 beta, 1 beta' and 1 omega subunit. When a sigma factor is associated with the core the holoenzyme is formed, which can initiate transcription.

It catalyses the reaction RNA(n) + a ribonucleoside 5'-triphosphate = RNA(n+1) + diphosphate. In terms of biological role, promotes RNA polymerase assembly. Latches the N- and C-terminal regions of the beta' subunit thereby facilitating its interaction with the beta and alpha subunits. The polypeptide is DNA-directed RNA polymerase subunit omega (Variovorax paradoxus (strain S110)).